Consider the following 513-residue polypeptide: ATP synthase subunit alpha (513 aa).

171–178 (GDRQIGKT) provides a ligand contact to ATP.

The protein belongs to the ATPase alpha/beta chains family. In terms of assembly, F-type ATPases have 2 components, CF(1) - the catalytic core - and CF(0) - the membrane proton channel. CF(1) has five subunits: alpha(3), beta(3), gamma(1), delta(1), epsilon(1). CF(0) has three main subunits: a(1), b(2) and c(9-12). The alpha and beta chains form an alternating ring which encloses part of the gamma chain. CF(1) is attached to CF(0) by a central stalk formed by the gamma and epsilon chains, while a peripheral stalk is formed by the delta and b chains.

It localises to the cell membrane. It catalyses the reaction ATP + H2O + 4 H(+)(in) = ADP + phosphate + 5 H(+)(out). Produces ATP from ADP in the presence of a proton gradient across the membrane. The alpha chain is a regulatory subunit. This Wolbachia pipientis subsp. Culex pipiens (strain wPip) protein is ATP synthase subunit alpha.